Here is a 492-residue protein sequence, read N- to C-terminus: uncharacterized protein (492 aa).

13 consecutive transmembrane segments (helical) span residues 67 to 87 (VAIMSIYGSLVYMSTIIGGWL), 88 to 108 (ADRVFGTANTVFYGGIFIMFG), 110 to 130 (IALAYPGSSIAFYISMVLIIV), 157 to 177 (GFSIFYMGINLGGLLAPLIVG), 185 to 205 (YHLGFGAAAVGMLLGLIVFAL), 232 to 252 (IGVIIVAIAVIISVQTGVLTI), 255 to 275 (FIDLVSILGILIPVIYFIIMF), 294 to 314 (LFIGAVMFWAIQEQGATILAV), 333 to 353 (WFQSLNPLFVVIFAPIFAWLW), 367 to 387 (FSIGIILAGLSFIIMVFPAMQ), 392 to 412 (LVSPLWLVLSFLLVVLGELCL), 434 to 454 (SMWFLTNAAAQAINAQVAGLF), and 464 to 484 (GTIGLISIVLGGILLLLSPVI).

It belongs to the major facilitator superfamily. Proton-dependent oligopeptide transporter (POT/PTR) (TC 2.A.17) family.

The protein resides in the cell membrane. This is an uncharacterized protein from Bacillus subtilis (strain 168).